The sequence spans 303 residues: UDP-N-acetylenolpyruvoylglucosamine reductase (303 aa).

The 181-residue stretch at 27 to 207 (KVGGISQVFY…TSISQKLQKI (181 aa)) folds into the FAD-binding PCMH-type domain. Residue Arg175 is part of the active site. The active-site Proton donor is Ser224. Glu294 is a catalytic residue.

The protein belongs to the MurB family. FAD is required as a cofactor.

It localises to the cytoplasm. It carries out the reaction UDP-N-acetyl-alpha-D-muramate + NADP(+) = UDP-N-acetyl-3-O-(1-carboxyvinyl)-alpha-D-glucosamine + NADPH + H(+). The protein operates within cell wall biogenesis; peptidoglycan biosynthesis. Cell wall formation. This Orientia tsutsugamushi (strain Boryong) (Rickettsia tsutsugamushi) protein is UDP-N-acetylenolpyruvoylglucosamine reductase.